Here is a 592-residue protein sequence, read N- to C-terminus: Isocitrate dehydrogenase kinase/phosphatase 1 (592 aa).

Residues 337 to 343 and lysine 358 contribute to the ATP site; that span reads APGTPGM. Aspartate 393 is an active-site residue.

The protein belongs to the AceK family.

It is found in the cytoplasm. The catalysed reaction is L-seryl-[isocitrate dehydrogenase] + ATP = O-phospho-L-seryl-[isocitrate dehydrogenase] + ADP + H(+). In terms of biological role, bifunctional enzyme which can phosphorylate or dephosphorylate isocitrate dehydrogenase (IDH) on a specific serine residue. This is a regulatory mechanism which enables bacteria to bypass the Krebs cycle via the glyoxylate shunt in response to the source of carbon. When bacteria are grown on glucose, IDH is fully active and unphosphorylated, but when grown on acetate or ethanol, the activity of IDH declines drastically concomitant with its phosphorylation. In Pseudoalteromonas translucida (strain TAC 125), this protein is Isocitrate dehydrogenase kinase/phosphatase 1.